Here is a 407-residue protein sequence, read N- to C-terminus: Argininosuccinate synthase (407 aa).

ATP is bound by residues 16–24 (AYSGGLDTS) and alanine 44. 2 residues coordinate L-citrulline: tyrosine 96 and serine 101. ATP is bound at residue glycine 126. Residues threonine 128, asparagine 132, and aspartate 133 each coordinate L-aspartate. Asparagine 132 contacts L-citrulline. 5 residues coordinate L-citrulline: arginine 136, serine 185, serine 194, glutamate 270, and tyrosine 282.

This sequence belongs to the argininosuccinate synthase family. Type 1 subfamily. As to quaternary structure, homotetramer.

It localises to the cytoplasm. It carries out the reaction L-citrulline + L-aspartate + ATP = 2-(N(omega)-L-arginino)succinate + AMP + diphosphate + H(+). It participates in amino-acid biosynthesis; L-arginine biosynthesis; L-arginine from L-ornithine and carbamoyl phosphate: step 2/3. This is Argininosuccinate synthase from Shewanella putrefaciens (strain CN-32 / ATCC BAA-453).